We begin with the raw amino-acid sequence, 581 residues long: MAAGGRGLIRALHSSPCPTWKRAQSGANGRLKPEYDAVVIGAGHNGLVAAAYLQRLGVNTAVFERRHVIGGAAVTEEIIPGFKFSRASYLLSLLRPQICTDLELKKHGLKLHLRDPYSFTPMLEEGTLNRLPRSLLLGTDMAANQKEISQFSRKDAQAFPRYEEFMKRLVLAIDPLLDAAPVDTTAFQHGSLLQRLRALSTLKPLLKAGRTLGAQLPQYYEVLTAPISKVLDQRFESEPLKATLATDAVIGAMTSPHTPGSGYVLLHHVMGSLEGTQGAWSYVQGGMGALSDAIASSAATRGASIFTEKTVAKVQVNSEGRAQGVTLQDGEEVRSRVVLSCASPQVTFLELTPQEWLPGAFVKRISQLDTQSPVTKINVAVDRLPNFQAAPNAPGDQPQGHHQCSIHLNCEDTLLLHQAFEDAKGGLPSQKPMIELCIPSSLDPTLAPPGCHVVSLFTQYTPYTLAGGKVWNEQEKNTYADKVFDCIEAYAPGFKRSVLARDILTPPDLERIFRLPGGNIFHGAMSLDQLYFARPVPQHSDYRCPVQGLYLCGSGAHPGGGVMGAAGRNAAHVVFRDLKNM.

V38–G71 lines the FAD pocket.

The protein belongs to the carotenoid/retinoid oxidoreductase family. Interacts with COX5B; this interaction may contribute to localize PYROXD2 to the inner face of the inner mitochondrial membrane.

Its subcellular location is the mitochondrion matrix. Functionally, probable oxidoreductase that may play a role as regulator of mitochondrial function. The protein is Pyridine nucleotide-disulfide oxidoreductase domain-containing protein 2 of Mus musculus (Mouse).